Reading from the N-terminus, the 435-residue chain is Evolutionarily conserved signaling intermediate in Toll pathway, mitochondrial (435 aa).

The transit peptide at 1-48 (MSWVQVNLLVRSLSRGWGGLCRPALSGTPFAQVSLQALRGLHCSAATH) directs the protein to the mitochondrion. K372 is covalently cross-linked (Glycyl lysine isopeptide (Lys-Gly) (interchain with G-Cter in ubiquitin)). The interval 401–435 (LTTSRLEGQSPPHSPPKGPEEDDETIQAEQQQGQS) is disordered.

This sequence belongs to the ECSIT family. In terms of assembly, interacts with MAP3K1, SMAD4 and TRAF6. Interacts with SMAD1 only after BMP4-treatment. Part of the mitochondrial complex I assembly/MCIA complex that comprises at least the core subunits TMEM126B, NDUFAF1, ECSIT and ACAD9 and complement subunits such as COA1 and TMEM186. Interacts with NDUFAF1. Interacts with ACAD9. Interacts with TRIM59. Interacts with TMEM70 and TMEM242. Interacts (when ubiquitinated) with NF-kappa-B subunits RELA and NFKB1. Interacts with RIGI, IFIT1 and MAVS; these interactions promote RLR-mediated type I IFN induction. Interacts with SQSTM1; this interaction inhibits TLR4 signaling via functional regulation of the TRAF6-ECSIT complex. Interacts with cereblon/CRBN; this interaction inhibits the ubiquitination of ECSIT. In terms of processing, ubiquitinated on Lys-372; leading to translocation in the nucleus together with RELA and NFKB1 and expression of NF-kappa-B-dependent genes. Detected in heart, brain, lung, liver, skeletal muscle, kidney and testis. Detected in embryonic mesoderm and epiblast, and in extraembryonic ectoderm.

Its subcellular location is the cytoplasm. The protein resides in the nucleus. The protein localises to the mitochondrion. Functionally, adapter protein that plays a role in different signaling pathways including TLRs and IL-1 pathways or innate antiviral induction signaling. Plays a role in the activation of NF-kappa-B by forming a signal complex with TRAF6 and TAK1/MAP3K7 to activate TAK1/MAP3K7 leading to activation of IKKs. Once ubiquitinated, interacts with the dissociated RELA and NFKB1 proteins and translocates to the nucleus where it induces NF-kappa-B-dependent gene expression. Plays a role in innate antiviral immune response by bridging the pattern recognition receptors RIGI and MDA5/IFIT1 to the MAVS complex at the mitochondrion. Promotes proteolytic activation of MAP3K1. Involved in the BMP signaling pathway. Required for normal embryonic development. In terms of biological role, as part of the MCIA complex, involved in the assembly of the mitochondrial complex I. In Mus musculus (Mouse), this protein is Evolutionarily conserved signaling intermediate in Toll pathway, mitochondrial.